We begin with the raw amino-acid sequence, 128 residues long: Probable 4-amino-4-deoxy-L-arabinose-phosphoundecaprenol flippase subunit ArnF (128 aa).

Over 1–2 the chain is Cytoplasmic; that stretch reads MG. The helical transmembrane segment at 3–23 threads the bilayer; sequence LMWGLFSVIIASAAQLSMGFA. Topologically, residues 24–35 are periplasmic; it reads ASHLPPMTHLWD. A helical membrane pass occupies residues 36–56; the sequence is FIAALLAFGLDARILLLGLLG. The Cytoplasmic segment spans residues 57–76; that stretch reads YLLSVFCWYKTLHKLALSKA. The chain crosses the membrane as a helical span at residues 77-97; it reads YALLSMSYVLVWIASMVLPGW. Residues 98 to 100 are Periplasmic-facing; sequence EGT. Residues 101 to 121 traverse the membrane as a helical segment; the sequence is FSLKALLGVACIMSGLMLIFL. Residues 122–128 lie on the Cytoplasmic side of the membrane; sequence PTTKQRY.

This sequence belongs to the ArnF family. Heterodimer of ArnE and ArnF.

Its subcellular location is the cell inner membrane. Its pathway is bacterial outer membrane biogenesis; lipopolysaccharide biosynthesis. Functionally, translocates 4-amino-4-deoxy-L-arabinose-phosphoundecaprenol (alpha-L-Ara4N-phosphoundecaprenol) from the cytoplasmic to the periplasmic side of the inner membrane. The chain is Probable 4-amino-4-deoxy-L-arabinose-phosphoundecaprenol flippase subunit ArnF from Escherichia coli O45:K1 (strain S88 / ExPEC).